Here is a 128-residue protein sequence, read N- to C-terminus: DELTA-urthionin-Uf1a (128 aa).

The N-terminal stretch at 1-24 (MEGKTVIVSLLLLSIVVGQIQVEA) is a signal peptide. Intrachain disulfides connect Cys27–Cys64, Cys28–Cys56, and Cys40–Cys50. A propeptide spans 67-128 (LSIPEVTGEA…LCTKNSIETA (62 aa)) (acidic domain).

It belongs to the plant thionin (TC 1.C.44) family. In terms of tissue distribution, expressed in trichomes, that are stiff epidermal hairs located on the surface of petioles and leaves.

It localises to the secreted. In terms of biological role, plant defense protein that causes pain by probable disruption of cell membranes. Shows cytotoxic activity against the neuroblastoma cell line SH-SY5Y and slightly weaker activity against several non-neuronal cell lines. In vivo, intraplantar injection into mice causes several nocifensive responses, along with swelling and redness. The chain is DELTA-urthionin-Uf1a from Urtica ferox (Tree nettle).